Reading from the N-terminus, the 254-residue chain is Persulfide dioxygenase ETHE1, mitochondrial (254 aa).

A mitochondrion-targeting transit peptide spans 1 to 7; it reads MAEAVLR. A phosphoserine mark is found at Ser-14 and Ser-19. N6-acetyllysine is present on Lys-66. Fe cation-binding residues include His-79, His-135, and Asp-154. Lys-172 carries the post-translational modification N6-acetyllysine; alternate. Residue Lys-172 is modified to N6-succinyllysine; alternate.

Belongs to the metallo-beta-lactamase superfamily. Glyoxalase II family. In terms of assembly, homodimer. Monomer. Interacts with TST. May interact with RELA. Fe(2+) serves as cofactor. In terms of tissue distribution, ubiquitously expressed.

The protein resides in the cytoplasm. The protein localises to the nucleus. Its subcellular location is the mitochondrion matrix. The catalysed reaction is S-sulfanylglutathione + O2 + H2O = sulfite + glutathione + 2 H(+). With respect to regulation, glutathione increases enzyme activity. Its function is as follows. Sulfur dioxygenase that plays an essential role in hydrogen sulfide catabolism in the mitochondrial matrix. Hydrogen sulfide (H(2)S) is first oxidized by SQRDL, giving rise to cysteine persulfide residues. ETHE1 consumes molecular oxygen to catalyze the oxidation of the persulfide, once it has been transferred to a thiophilic acceptor, such as glutathione (R-SSH). Plays an important role in metabolic homeostasis in mitochondria by metabolizing hydrogen sulfide and preventing the accumulation of supraphysiological H(2)S levels that have toxic effects, due to the inhibition of cytochrome c oxidase. First described as a protein that can shuttle between the nucleus and the cytoplasm and suppress p53-induced apoptosis by sequestering the transcription factor RELA/NFKB3 in the cytoplasm and preventing its accumulation in the nucleus. The chain is Persulfide dioxygenase ETHE1, mitochondrial (ETHE1) from Homo sapiens (Human).